The sequence spans 149 residues: MGRICPVNSRARRLRARPGRPSGDSLPYHQLQGGAPRLWSPDPGRPAAYRRAHVCDVTAPRWGSTSRQGEGAVLQRMLGRRAPPSWSRDHAYSRRGWENAALFLNRKRKQEGTENTSICCRPESALACGGNLSPQFLKKVIQIQTQELW.

The segment at 1–41 (MGRICPVNSRARRLRARPGRPSGDSLPYHQLQGGAPRLWSP) is disordered.

In terms of tissue distribution, testis specific.

In Homo sapiens (Human), this protein is Down syndrome critical region protein 9 (DSCR9).